We begin with the raw amino-acid sequence, 219 residues long: Large ribosomal subunit protein uL3 (219 aa).

The tract at residues 133–153 is disordered; that stretch reads GRASHGNSRSHNVPGSIGMAQ. Residue glutamine 153 is modified to N5-methylglutamine.

The protein belongs to the universal ribosomal protein uL3 family. As to quaternary structure, part of the 50S ribosomal subunit. Forms a cluster with proteins L14 and L19. Post-translationally, methylated by PrmB.

Its function is as follows. One of the primary rRNA binding proteins, it binds directly near the 3'-end of the 23S rRNA, where it nucleates assembly of the 50S subunit. This Burkholderia mallei (strain NCTC 10247) protein is Large ribosomal subunit protein uL3.